Reading from the N-terminus, the 108-residue chain is MAVKIRLARSGAKKCAYFKIVIANNCSPRDGAFIEKVGHYNPMLPKDNHERVILKTDRIEHWLSHGAQPTEKVINFLQQFSITLPLAIQKKHNIKLKNYVAKPSKKSK.

The protein belongs to the bacterial ribosomal protein bS16 family.

The protein is Small ribosomal subunit protein bS16 of Orientia tsutsugamushi (strain Boryong) (Rickettsia tsutsugamushi).